Reading from the N-terminus, the 282-residue chain is 31 kDa protein (282 aa).

Involved in efficient vector transmission. Might slightly enhance symptom expression and increase root-specific silencing suppression (Potential). The chain is 31 kDa protein (p31) from Beet necrotic yellow vein virus (isolate Japan/S) (BNYVV).